Consider the following 468-residue polypeptide: Cysteine--tRNA ligase (468 aa).

Cysteine 33 contacts Zn(2+). A 'HIGH' region motif is present at residues 35–45 (ATVQGLPHIGH). Residues cysteine 211, histidine 236, and glutamate 240 each contribute to the Zn(2+) site. Residues 267 to 271 (KMSKS) carry the 'KMSKS' region motif. Lysine 270 is an ATP binding site.

The protein belongs to the class-I aminoacyl-tRNA synthetase family. In terms of assembly, monomer. Zn(2+) is required as a cofactor.

It is found in the cytoplasm. The catalysed reaction is tRNA(Cys) + L-cysteine + ATP = L-cysteinyl-tRNA(Cys) + AMP + diphosphate. The chain is Cysteine--tRNA ligase from Mycobacterium ulcerans (strain Agy99).